The chain runs to 293 residues: Epidermal growth factor-like protein 8 (293 aa).

The first 25 residues, 1 to 25 (MGSRAELCTLLGGFSFLLLLIPGEG), serve as a signal peptide directing secretion. The region spanning 34-112 (SQGVCSKQTL…RHPGALTCEA (79 aa)) is the EMI domain. Cystine bridges form between C38/C97, C65/C71, C96/C110, C114/C124, C118/C130, C132/C141, C148/C159, C155/C168, and C170/C183. The N-linked (GlcNAc...) asparagine glycan is linked to N50. One can recognise an EGF-like 1 domain in the interval 111-142 (EAICAKPCLNGGVCVRPDQCECAPGWGGKHCH). One can recognise an EGF-like 2; calcium-binding domain in the interval 144–184 (DVDECRTSITLCSHHCFNTAGSFTCGCPHDLVLGVDGRTCM). A coiled-coil region spans residues 195 to 232 (SILSVAVREAEKDERALKQEIHELRGRLERLEQWAGQA).

The protein resides in the secreted. This is Epidermal growth factor-like protein 8 (EGFL8) from Homo sapiens (Human).